The sequence spans 380 residues: E3 ubiquitin-protein ligase RNF13 (380 aa).

The N-terminal stretch at 1–34 is a signal peptide; it reads MLLSIGMLMLSATQVYTILTVQLFAFLNLLPVEA. Residues 35 to 182 lie on the Lumenal side of the membrane; that stretch reads DILAYNFENA…VPEFSLPLEY (148 aa). One can recognise a PA domain in the interval 65 to 160; sequence KGFLINSKPE…GESSANSLKD (96 aa). N-linked (GlcNAc...) asparagine glycosylation is present at Asn-88. Residues 183 to 203 form a helical membrane-spanning segment; the sequence is YLIPFLIIVGICLILIVIFMI. The Cytoplasmic segment spans residues 204-380; that stretch reads TKFVQDRHRA…ERDYNIANTV (177 aa). Residues 240-282 form an RING-type; atypical zinc finger; that stretch reads CAICLDEYEDGDKLRILPCSHAYHCKCVDPWLTKTKKTCPVCK. The segment at 285–380 is disordered; the sequence is VVPSQGDSDS…ERDYNIANTV (96 aa). Composition is skewed to acidic residues over residues 292 to 304 and 339 to 356; these read SDSDTDSSQEENE and SDYEEDDNDTDSSDAENE.

Interacts with ERN1. Autoubiquitinated.

The protein localises to the endoplasmic reticulum membrane. Its subcellular location is the late endosome membrane. It localises to the lysosome membrane. It is found in the nucleus inner membrane. It catalyses the reaction S-ubiquitinyl-[E2 ubiquitin-conjugating enzyme]-L-cysteine + [acceptor protein]-L-lysine = [E2 ubiquitin-conjugating enzyme]-L-cysteine + N(6)-ubiquitinyl-[acceptor protein]-L-lysine.. It functions in the pathway protein modification; protein ubiquitination. E3 ubiquitin-protein ligase that regulates cell proliferation. Involved in apoptosis regulation. Mediates ER stress-induced activation of JNK signaling pathway and apoptosis by promoting ERN1 activation and splicing of XBP1 mRNA. Also involved in protein trafficking and localization. This is E3 ubiquitin-protein ligase RNF13 (RNF13) from Bos taurus (Bovine).